Reading from the N-terminus, the 138-residue chain is ATP synthase epsilon chain 1 (138 aa).

It belongs to the ATPase epsilon chain family. F-type ATPases have 2 components, CF(1) - the catalytic core - and CF(0) - the membrane proton channel. CF(1) has five subunits: alpha(3), beta(3), gamma(1), delta(1), epsilon(1). CF(0) has three main subunits: a, b and c.

Its subcellular location is the cell inner membrane. Produces ATP from ADP in the presence of a proton gradient across the membrane. This is ATP synthase epsilon chain 1 from Syntrophotalea carbinolica (strain DSM 2380 / NBRC 103641 / GraBd1) (Pelobacter carbinolicus).